We begin with the raw amino-acid sequence, 166 residues long: Protein SprT (166 aa).

A SprT-like domain is found at 20–164; the sequence is EHLANANRKL…CVRCGDLLVA (145 aa). Position 78 (His-78) interacts with Zn(2+). Glu-79 is a catalytic residue. His-82 is a Zn(2+) binding site.

The protein belongs to the SprT family. Requires Zn(2+) as cofactor.

The protein resides in the cytoplasm. This is Protein SprT from Klebsiella pneumoniae subsp. pneumoniae (strain ATCC 700721 / MGH 78578).